We begin with the raw amino-acid sequence, 516 residues long: Probable 2-isopropylmalate synthase (516 aa).

The Pyruvate carboxyltransferase domain maps to 20 to 271 (VTVFDTTLRD…KTNIRTEYLV (252 aa)).

The protein belongs to the alpha-IPM synthase/homocitrate synthase family.

The enzyme catalyses 3-methyl-2-oxobutanoate + acetyl-CoA + H2O = (2S)-2-isopropylmalate + CoA + H(+). It participates in amino-acid biosynthesis; L-leucine biosynthesis; L-leucine from 3-methyl-2-oxobutanoate: step 1/4. In terms of biological role, catalyzes the condensation of the acetyl group of acetyl-CoA with 3-methyl-2-oxobutanoate (2-oxoisovalerate) to form 3-carboxy-3-hydroxy-4-methylpentanoate (2-isopropylmalate). This is Probable 2-isopropylmalate synthase (leuA) from Methanosarcina mazei (strain ATCC BAA-159 / DSM 3647 / Goe1 / Go1 / JCM 11833 / OCM 88) (Methanosarcina frisia).